We begin with the raw amino-acid sequence, 422 residues long: Exodeoxyribonuclease 7 large subunit (422 aa).

This sequence belongs to the XseA family. Heterooligomer composed of large and small subunits.

Its subcellular location is the cytoplasm. The catalysed reaction is Exonucleolytic cleavage in either 5'- to 3'- or 3'- to 5'-direction to yield nucleoside 5'-phosphates.. Bidirectionally degrades single-stranded DNA into large acid-insoluble oligonucleotides, which are then degraded further into small acid-soluble oligonucleotides. This Leptospira borgpetersenii serovar Hardjo-bovis (strain JB197) protein is Exodeoxyribonuclease 7 large subunit.